We begin with the raw amino-acid sequence, 274 residues long: Large ribosomal subunit protein uL2cz/uL2cy (274 aa).

The interval 224 to 274 (NPVDHPHGGGEGRAPIGRKKPATPWGYPALGRRSRKRNKYSDNLILRRRSK) is disordered.

It belongs to the universal ribosomal protein uL2 family. Part of the 50S ribosomal subunit.

It is found in the plastid. It localises to the chloroplast. This Morus indica (Mulberry) protein is Large ribosomal subunit protein uL2cz/uL2cy (rpl2-A).